A 1249-amino-acid chain; its full sequence is Protein lingerer (1249 aa).

The tract at residues 1-66 is disordered; it reads MSTQTRSGGG…VVKAKQPTAE (66 aa). 2 stretches are compositionally biased toward gly residues: residues 7–30 and 38–50; these read SGGG…GAAG and GSTG…GAGG. The UBA domain maps to 84-124; sequence KIQEKIQSLMETTQRSEEEVCCALQECDSDLDRAVIFLLET. 10 disordered regions span residues 132-312, 350-375, 454-506, 549-579, 616-717, 738-922, 1016-1042, 1124-1149, 1164-1186, and 1211-1249; these read TTSK…LKPE, SAGA…ASNV, MPPM…PPTT, YAAA…AVEM, TTGT…TSVS, PYGQ…SLPI, GRFT…TGSG, QQQS…APSM, KQSF…AGTT, and QNMH…TGPN. Residues 186 to 209 are compositionally biased toward gly residues; sequence NRGGSGNQRSGGPGRGGRAGGYRD. A compositionally biased stretch (basic and acidic residues) spans 210–227; the sequence is GGGDRDRDRDRNGYDKGG. Composition is skewed to gly residues over residues 228–240 and 248–269; these read EGGG…GGDG and DGPG…GGPR. Residues 350-369 are compositionally biased toward low complexity; it reads SAGAGAQQQQSQQSTQTGVP. Polar residues predominate over residues 457–494; that stretch reads MNTSSSLSAEQSQYFSTLSSQNSNLQPTPSAVGFQQQP. Low complexity-rich tracts occupy residues 549-559, 616-639, and 647-664; these read YAAAATQQPPV, TTGT…PATV, and QSQL…APQQ. Over residues 678 to 705 the composition is skewed to polar residues; it reads ASSQIMPGQGTTEALSSQNDGLANSYSR. Residues 706–717 are compositionally biased toward low complexity; the sequence is TNASGSVSTSVS. Polar residues-rich tracts occupy residues 738-769 and 777-809; these read PYGQ…TASY and GYNN…NVNA. The span at 811 to 861 shows a compositional bias: low complexity; the sequence is QPPSSSVTNNVVPNNNTGNSVGGVSNQSNLPVNNNAVNSSSNNNAGGYLSS. The span at 862 to 873 shows a compositional bias: polar residues; it reads QYPVSQTSSAFP. Low complexity-rich tracts occupy residues 874-884, 892-922, and 1023-1034; these read SQQNYQNSSQN, NSNT…SLPI, and NNSSPVSNVPSS. Residues 1124–1138 show a composition bias toward polar residues; it reads QQQSKGQTVANQQSG. Residues 1216-1249 show a composition bias toward polar residues; it reads DSNSSGQRPQNNNQGKTASKQQGYSASTYWTGPN.

It is found in the cytoplasm. In terms of biological role, acts in the nervous system to mediate the control of copulatory organs during courtship. This is Protein lingerer from Anopheles gambiae (African malaria mosquito).